The following is a 471-amino-acid chain: Glutamate--tRNA ligase (471 aa).

The 'HIGH' region signature appears at 9 to 19 (PSPTGYLHVGG). Positions 98, 100, 125, and 127 each coordinate Zn(2+). The 'KMSKS' region signature appears at 237-241 (KLSKR). ATP is bound at residue Lys-240.

This sequence belongs to the class-I aminoacyl-tRNA synthetase family. Glutamate--tRNA ligase type 1 subfamily. Monomer. Zn(2+) is required as a cofactor.

The protein localises to the cytoplasm. It catalyses the reaction tRNA(Glu) + L-glutamate + ATP = L-glutamyl-tRNA(Glu) + AMP + diphosphate. Functionally, catalyzes the attachment of glutamate to tRNA(Glu) in a two-step reaction: glutamate is first activated by ATP to form Glu-AMP and then transferred to the acceptor end of tRNA(Glu). The sequence is that of Glutamate--tRNA ligase from Yersinia pestis.